A 780-amino-acid chain; its full sequence is Subtilisin-like protease SBT5.1 (780 aa).

A signal peptide spans 1–25 (MMRCLTITIMFFMFFFLSVIQKCKS). Positions 26 to 106 (ETSKSGDYII…VFPDQMLQLH (81 aa)) are cleaved as a propeptide — activation peptide. In terms of domain architecture, Inhibitor I9 spans 33 to 106 (YIIYMGAASS…VFPDQMLQLH (74 aa)). Positions 110 to 617 (SWDFLVQESY…AGQVTIFGPS (508 aa)) constitute a Peptidase S8 domain. Catalysis depends on aspartate 147, which acts as the Charge relay system. N-linked (GlcNAc...) asparagine glycosylation is present at asparagine 197. Histidine 215 (charge relay system) is an active-site residue. A glycan (N-linked (GlcNAc...) asparagine) is linked at asparagine 230. The PA domain maps to 385–469 (IDANEEAARN…PEDGIQIMSY (85 aa)). N-linked (GlcNAc...) asparagine glycosylation is present at asparagine 471. The active-site Charge relay system is serine 550. An N-linked (GlcNAc...) asparagine glycan is attached at asparagine 776.

This sequence belongs to the peptidase S8 family.

The protein resides in the secreted. This is Subtilisin-like protease SBT5.1 from Arabidopsis thaliana (Mouse-ear cress).